We begin with the raw amino-acid sequence, 892 residues long: Alanine--tRNA ligase (892 aa).

Zn(2+) contacts are provided by His577, His581, Cys680, and His684.

This sequence belongs to the class-II aminoacyl-tRNA synthetase family. Requires Zn(2+) as cofactor.

The protein localises to the cytoplasm. The catalysed reaction is tRNA(Ala) + L-alanine + ATP = L-alanyl-tRNA(Ala) + AMP + diphosphate. Functionally, catalyzes the attachment of alanine to tRNA(Ala) in a two-step reaction: alanine is first activated by ATP to form Ala-AMP and then transferred to the acceptor end of tRNA(Ala). Also edits incorrectly charged Ser-tRNA(Ala) and Gly-tRNA(Ala) via its editing domain. The sequence is that of Alanine--tRNA ligase from Arthrobacter sp. (strain FB24).